The following is a 429-amino-acid chain: Serine--tRNA ligase (429 aa).

236-238 lines the L-serine pocket; it reads TAE. Residue 267–269 participates in ATP binding; the sequence is RSE. Glu290 contacts L-serine. 354 to 357 contacts ATP; it reads EVSS. Ser390 provides a ligand contact to L-serine.

Belongs to the class-II aminoacyl-tRNA synthetase family. Type-1 seryl-tRNA synthetase subfamily. Homodimer. The tRNA molecule binds across the dimer.

The protein resides in the cytoplasm. It carries out the reaction tRNA(Ser) + L-serine + ATP = L-seryl-tRNA(Ser) + AMP + diphosphate + H(+). It catalyses the reaction tRNA(Sec) + L-serine + ATP = L-seryl-tRNA(Sec) + AMP + diphosphate + H(+). It participates in aminoacyl-tRNA biosynthesis; selenocysteinyl-tRNA(Sec) biosynthesis; L-seryl-tRNA(Sec) from L-serine and tRNA(Sec): step 1/1. In terms of biological role, catalyzes the attachment of serine to tRNA(Ser). Is also able to aminoacylate tRNA(Sec) with serine, to form the misacylated tRNA L-seryl-tRNA(Sec), which will be further converted into selenocysteinyl-tRNA(Sec). The polypeptide is Serine--tRNA ligase (Wigglesworthia glossinidia brevipalpis).